Consider the following 523-residue polypeptide: Probable methylmalonate-semialdehyde/malonate-semialdehyde dehydrogenase [acylating], mitochondrial (523 aa).

A mitochondrion-targeting transit peptide spans 1–22 (MLSRLARVQPKCQQLAHFSTSK). NAD(+) is bound by residues Phe-175, Lys-199, and Glu-202. The active-site Nucleophile is Cys-307. Glu-407 is a binding site for NAD(+).

It belongs to the aldehyde dehydrogenase family. As to quaternary structure, homodimer.

It is found in the mitochondrion. It carries out the reaction 2-methyl-3-oxopropanoate + NAD(+) + CoA + H2O = propanoyl-CoA + hydrogencarbonate + NADH + H(+). The catalysed reaction is 3-oxopropanoate + NAD(+) + CoA + H2O = hydrogencarbonate + acetyl-CoA + NADH + H(+). Probable malonate and methylmalonate semialdehyde dehydrogenase involved in the catabolism of valine, thymine, and compounds catabolized by way of beta-alanine, including uracil and cytidine. The protein is Probable methylmalonate-semialdehyde/malonate-semialdehyde dehydrogenase [acylating], mitochondrial (alh-8) of Caenorhabditis elegans.